The following is a 311-amino-acid chain: Mediator of RNA polymerase II transcription subunit 27-B (311 aa).

This sequence belongs to the Mediator complex subunit 27 family. As to quaternary structure, component of the Mediator complex.

It localises to the nucleus. In terms of biological role, component of the Mediator complex, a coactivator involved in the regulated transcription of nearly all RNA polymerase II-dependent genes. Mediator functions as a bridge to convey information from gene-specific regulatory proteins to the basal RNA polymerase II transcription machinery. Mediator is recruited to promoters by direct interactions with regulatory proteins and serves as a scaffold for the assembly of a functional preinitiation complex with RNA polymerase II and the general transcription factors. The polypeptide is Mediator of RNA polymerase II transcription subunit 27-B (med27-b) (Xenopus laevis (African clawed frog)).